An 880-amino-acid chain; its full sequence is Zinc-responsive transcriptional regulator ZAP1 (880 aa).

Disordered regions lie at residues 1–26 and 140–164; these read MDAL…AASA and NNFH…PRRK. Residues 17–26 show a composition bias toward low complexity; that stretch reads ATSAATAASA. Positions 147 to 158 are enriched in polar residues; the sequence is SDPTSPQQNSKS. Phosphoserine is present on residues Ser-156 and Ser-166. Residues 182–502 are zinc-responsive domain 1 (ZRD(AD1)); it reads KPNPPPGSDD…LTNNDLNDLI (321 aa). A transcription activation domain 1 (AD1) region spans residues 207 to 402; that stretch reads HPKSEANIKQ…YEVPFGKHIN (196 aa). 2 disordered regions span residues 436–482 and 510–555; these read NRCN…VNNS and RFRN…PSSI. The segment covering 442-456 has biased composition (low complexity); it reads NNLNGSNNNTAGATS. Over residues 460 to 474 the composition is skewed to basic residues; that stretch reads QHHHHRIQFHSHKPN. Ser-515 bears the Phosphoserine mark. Over residues 545–555 the composition is skewed to low complexity; that stretch reads SSLEDSLPSSI. Residues 579–604 form a C2H2-type 1 zinc finger; that stretch reads LKCKWKECPESCSSLFDLQRHLLKDH. The zinc-responsive domain 2 (ZRD(AD2)) stretch occupies residues 579-641; it reads LKCKWKECPE…SIVNHINCQH (63 aa). Zn(2+) is bound by residues Cys-581, Cys-586, His-599, His-604, Cys-618, Cys-623, His-636, and His-641. The tract at residues 611 to 640 is transcription activation domain 2 (AD2); it reads HPMEPLACNWEDCDFLGDDTCSIVNHINCQ. The segment at 616–641 adopts a C2H2-type 2; atypical zinc-finger fold; the sequence is LACNWEDCDFLGDDTCSIVNHINCQH. 5 consecutive C2H2-type zinc fingers follow at residues 705–730, 738–762, 768–790, 796–818, and 824–846; these read VICQ…EAVH, YQCL…LKVH, YKCK…TRTH, YKCH…IRTH, and LQCK…IKTH. Residues 705–846 constitute a DNA-binding region (DNA-binding domain); it reads VICQWDGCNK…SNLSKHIKTH (142 aa).

Its subcellular location is the nucleus. Active in zinc-limited cells and repressed in replete cells. Zinc controls ZAP1 DNA binding activity. Functionally, transcription regulator controlling zinc-responsive gene expression. Binds to zinc-responsive elements (ZREs) (consensus sequence 5'-ACCYYNAAGGT-3') in the promoter of target genes. Recruits SWI/SNF, SAGA, and Mediator complexes as coactivators in a zinc-responsive manner. Involved in zinc ion homeostasis by zinc-responsive transcriptional regulation of the zinc uptake system genes ZTR1 and ZTR2. Positively regulates ETR1 expression, affecting mitochondrial function. This chain is Zinc-responsive transcriptional regulator ZAP1 (ZAP1), found in Saccharomyces cerevisiae (strain ATCC 204508 / S288c) (Baker's yeast).